Here is a 335-residue protein sequence, read N- to C-terminus: UDP-N-acetylenolpyruvoylglucosamine reductase 1 (335 aa).

The FAD-binding PCMH-type domain maps to 36–202; that stretch reads RIGGPAAVFA…LEVELLLKPG (167 aa). Residue R181 is part of the active site. The active-site Proton donor is the S231. Residue E306 is part of the active site.

Belongs to the MurB family. The cofactor is FAD.

Its subcellular location is the cytoplasm. The enzyme catalyses UDP-N-acetyl-alpha-D-muramate + NADP(+) = UDP-N-acetyl-3-O-(1-carboxyvinyl)-alpha-D-glucosamine + NADPH + H(+). Its pathway is cell wall biogenesis; peptidoglycan biosynthesis. Its function is as follows. Cell wall formation. This is UDP-N-acetylenolpyruvoylglucosamine reductase 1 (murB1) from Corynebacterium glutamicum (strain ATCC 13032 / DSM 20300 / JCM 1318 / BCRC 11384 / CCUG 27702 / LMG 3730 / NBRC 12168 / NCIMB 10025 / NRRL B-2784 / 534).